Consider the following 703-residue polypeptide: Polyribonucleotide nucleotidyltransferase (703 aa).

Positions 482 and 488 each coordinate Mg(2+). The region spanning 549–607 (PKAQVMKIPEDKVGLVIGPAGKNIKYIKEQFGASVWIDGANAYINAPTIEAVNKAADFI) is the KH domain. Residues 617–679 (GGVYEGKVIR…EQNRLNLCSP (63 aa)) enclose the S1 motif domain. The tract at residues 677–703 (CSPDYQKPENQERPRKEQLNRKPHHRK) is disordered. The span at 682-696 (QKPENQERPRKEQLN) shows a compositional bias: basic and acidic residues.

Belongs to the polyribonucleotide nucleotidyltransferase family. Mg(2+) serves as cofactor.

It localises to the cytoplasm. It catalyses the reaction RNA(n+1) + phosphate = RNA(n) + a ribonucleoside 5'-diphosphate. Functionally, involved in mRNA degradation. Catalyzes the phosphorolysis of single-stranded polyribonucleotides processively in the 3'- to 5'-direction. The sequence is that of Polyribonucleotide nucleotidyltransferase from Hydrogenobaculum sp. (strain Y04AAS1).